The chain runs to 447 residues: Tubulin beta-1 chain (447 aa).

Gln-11 is a GTP binding site. Phosphoserine is present on Ser-40. Residues Glu-69, Ser-138, Gly-142, Thr-143, Gly-144, Asn-204, and Asn-226 each contribute to the GTP site. Glu-69 is a binding site for Mg(2+). A Phosphoserine modification is found at Ser-339. Residues 427–447 are disordered; sequence EATADEDAEFEEEQEAEVDEN. Positions 429–447 are enriched in acidic residues; it reads TADEDAEFEEEQEAEVDEN.

This sequence belongs to the tubulin family. Dimer of alpha and beta chains. A typical microtubule is a hollow water-filled tube with an outer diameter of 25 nm and an inner diameter of 15 nM. Alpha-beta heterodimers associate head-to-tail to form protofilaments running lengthwise along the microtubule wall with the beta-tubulin subunit facing the microtubule plus end conferring a structural polarity. Microtubules usually have 13 protofilaments but different protofilament numbers can be found in some organisms and specialized cells. Interacts with mgr and Vhl. Requires Mg(2+) as cofactor.

Its subcellular location is the cytoplasm. The protein resides in the cytoskeleton. Tubulin is the major constituent of microtubules, a cylinder consisting of laterally associated linear protofilaments composed of alpha- and beta-tubulin heterodimers. Microtubules grow by the addition of GTP-tubulin dimers to the microtubule end, where a stabilizing cap forms. Below the cap, tubulin dimers are in GDP-bound state, owing to GTPase activity of alpha-tubulin. The chain is Tubulin beta-1 chain (betaTub56D) from Drosophila melanogaster (Fruit fly).